Here is a 275-residue protein sequence, read N- to C-terminus: Large ribosomal subunit protein uL2 (275 aa).

The segment at 222–275 (GVAMNPVDHPMGGGEGRSSGGRHPCSPWGMPTKGYKTRKNKTTDKFIVRKRNKR) is disordered.

This sequence belongs to the universal ribosomal protein uL2 family. Part of the 50S ribosomal subunit. Forms a bridge to the 30S subunit in the 70S ribosome.

One of the primary rRNA binding proteins. Required for association of the 30S and 50S subunits to form the 70S ribosome, for tRNA binding and peptide bond formation. It has been suggested to have peptidyltransferase activity; this is somewhat controversial. Makes several contacts with the 16S rRNA in the 70S ribosome. In Desulfatibacillum aliphaticivorans, this protein is Large ribosomal subunit protein uL2.